The following is a 201-amino-acid chain: uncharacterized protein (201 aa).

The chain crosses the membrane as a helical span at residues 11–31 (IIILTIMILTIIIFTRTINGL).

The protein resides in the membrane. This is an uncharacterized protein from Acanthamoeba polyphaga mimivirus (APMV).